The sequence spans 328 residues: Thiamine thiazole synthase (328 aa).

Substrate contacts are provided by residues alanine 87, glutamate 108 to alanine 109, glycine 116, and valine 181. 2,3-didehydroalanine (Cys) is present on cysteine 215. Residues aspartate 217, histidine 232, methionine 284, and arginine 294–glycine 296 contribute to the substrate site.

It belongs to the THI4 family. In terms of assembly, homooctamer. It depends on Fe cation as a cofactor. During the catalytic reaction, a sulfide is transferred from Cys-215 to a reaction intermediate, generating a dehydroalanine residue.

It localises to the cytoplasm. The protein resides in the nucleus. The catalysed reaction is [ADP-thiazole synthase]-L-cysteine + glycine + NAD(+) = [ADP-thiazole synthase]-dehydroalanine + ADP-5-ethyl-4-methylthiazole-2-carboxylate + nicotinamide + 3 H2O + 2 H(+). In terms of biological role, involved in biosynthesis of the thiamine precursor thiazole. Catalyzes the conversion of NAD and glycine to adenosine diphosphate 5-(2-hydroxyethyl)-4-methylthiazole-2-carboxylic acid (ADT), an adenylated thiazole intermediate. The reaction includes an iron-dependent sulfide transfer from a conserved cysteine residue of the protein to a thiazole intermediate. The enzyme can only undergo a single turnover, which suggests it is a suicide enzyme. May have additional roles in adaptation to various stress conditions and in DNA damage tolerance. The chain is Thiamine thiazole synthase (thi2) from Schizosaccharomyces pombe (strain 972 / ATCC 24843) (Fission yeast).